The chain runs to 65 residues: Metallothionein-like protein type 3 (65 aa).

The protein belongs to the metallothionein superfamily. Type 15 family.

Metallothioneins have a high content of cysteine residues that bind various heavy metals. This chain is Metallothionein-like protein type 3, found in Carica papaya (Papaya).